The chain runs to 353 residues: MSSKKKTKPVLPPGPVMVDVAGTTLTKDEKRRLRNPLVGGVILFARNFTDRRQLCALTRAIHKARKEPLLIAVDHEGGRVQRFRDDGFTALPPMQELGKLWDRDPLAAMRLATEAGYVLAAELRACGVDLSFTPVLDLDYGVSKVIGNRAFHHDARVVTMLSRALAQGLALAGMAACGKHFPGHGFVGADSHHEIPVDPRPLARILKDDAAPYAWLGDLVMPAVMPAHVIYPKVDAQPAGFSRRWVSEILRERLGYDGVVFSDDLTMEGASVAGDILARAEAALGAGCDMVLVCNRPDLADELLDRLQVQHPAASVERIRRLMPRFAAPDWDTLQNDSRYQHARRLQSQIVSG.

Residues Asp-74, Arg-82, Arg-149, and Lys-179–His-180 contribute to the substrate site. Residue His-192 is the Proton donor/acceptor of the active site. Asp-263 serves as the catalytic Nucleophile.

Belongs to the glycosyl hydrolase 3 family. NagZ subfamily.

The protein localises to the cytoplasm. The catalysed reaction is Hydrolysis of terminal non-reducing N-acetyl-D-hexosamine residues in N-acetyl-beta-D-hexosaminides.. It participates in cell wall biogenesis; peptidoglycan recycling. In terms of biological role, plays a role in peptidoglycan recycling by cleaving the terminal beta-1,4-linked N-acetylglucosamine (GlcNAc) from peptide-linked peptidoglycan fragments, giving rise to free GlcNAc, anhydro-N-acetylmuramic acid and anhydro-N-acetylmuramic acid-linked peptides. The chain is Beta-hexosaminidase from Bordetella bronchiseptica (strain ATCC BAA-588 / NCTC 13252 / RB50) (Alcaligenes bronchisepticus).